The sequence spans 426 residues: MVKLSLQCAVVDQAGSSFDVEIDDSAKVSKLKKVIKEENPATITCDAKDLQLFLAKKDDAWLDGAGAAAVELDEHGHPQGCVQMDPTLWVKNPKHFGDNFQPGEGQVHVLVVVPEGVVGSASETSKMDFVVDKVSKLYEHSVLSKRTRYVHSEMSSSKGNKLVKELKIRVTPVDAVPFTGGSPTPVEEFEWIKGRTEEQQSGRYRDYVEANIGDVLRNNKLCVFSVEKGANILSVEVPGCDVDLAGRTDMIVLSAIVQKFPHYLPHLPGVKMLIEVKREVKSASEFQALSELIAMDFIVDESVMALLTNLTNHWEFLWVSNKSNNRPIIATTTLTTPGEAFEVIRTLLAQSSTADADIMLPCLAEPVKRRKLNQMLPFIGEASGDGIRESIERYYDIASCLGPDFDMARAVARQVTRSIPTLSYFS.

The interval 20–57 (VEIDDSAKVSKLKKVIKEENPATITCDAKDLQLFLAKK) is LQLFLAK domain. The tract at residues 59–107 (DAWLDGAGAAAVELDEHGHPQGCVQMDPTLWVKNPKHFGDNFQPGEGQV) is DWL domain. An HVLVXXP motif motif is present at residues 108–114 (HVLVVVP). The segment at 115–426 (EGVVGSASET…RSIPTLSYFS (312 aa)) is effector domain.

This sequence belongs to the Crinkler effector family.

The protein resides in the secreted. Its subcellular location is the host nucleus. Its function is as follows. Secreted effector that is critical to pathogenesis by suppressing plant immune responsess. Promotes Phytophthora infection by suppressing the H(2)O(2) accumulation and callose deposition. May induce cell death by regulating expression of cell death-related genes. The protein is Crinkler effector protein 4 of Phytophthora capsici.